The sequence spans 448 residues: uncharacterized protein (448 aa).

12 consecutive transmembrane segments (helical) span residues 14 to 34 (PFIIGTIAIALFTDLFLYGII), 59 to 79 (TLLAVYAVANIAASSPIGFLA), 87 to 107 (VPMLIGLIFLTSATALLTFGN), 120 to 140 (GLSAAVVWTVGLALLVDVVGA), 148 to 168 (GGIFGFISLGEIIAPVFGGIV), 171 to 191 (SLGYYASFGVCFIILLLDIAL), 250 to 270 (IFGPFWTSFVNSCLFSAFDAT), 288 to 308 (LMFGVLSTPYFFCGAWAGAMV), 316 to 333 (IGKRAYAILGCTLFLLCI), 338 to 358 (TSLNIYLFSAFLAINGVVLAF), 392 to 412 (FSAYNIVYSLGMIIGPLVAGF), and 417 to 437 (FNFITSIACLSLLCFSASLMA).

It belongs to the major facilitator superfamily. TCR/Tet family.

It localises to the endoplasmic reticulum. The protein localises to the membrane. This is an uncharacterized protein from Schizosaccharomyces pombe (strain 972 / ATCC 24843) (Fission yeast).